The following is a 350-amino-acid chain: MKPQLESLGVYKAGLSEEALKRKFNVEGEFSRLASNENPIGPSPQVYEAIRSQDALNYYPDPEAIQLKASLSEFYQVDSEQILVGAGLDEIIMMISRARLNPKGHILTSEGTFIQYTTHALIEDNEVVSIPLKEGKFDLESFKDKMNDETSIIWICNPNNPTGTYVTETELTGFLESVHEDVMVVLDEAYFEFVLREDYPDGVALLKRFPNLIVLRTFSKAYGLAGLRVGYAITSKAYIDVFNKVKLPFNVTALSLVGAIAALKDQQYLKDYVAHNDKERNKFFEADYKEHLIDSVTNFIFVKTNQPEALFEALIKGGVIARPMPNGVRISIGTRDDNEKVHKVINSFFS.

Lysine 220 carries the N6-(pyridoxal phosphate)lysine modification.

The protein belongs to the class-II pyridoxal-phosphate-dependent aminotransferase family. Histidinol-phosphate aminotransferase subfamily. Homodimer. Requires pyridoxal 5'-phosphate as cofactor.

The catalysed reaction is L-histidinol phosphate + 2-oxoglutarate = 3-(imidazol-4-yl)-2-oxopropyl phosphate + L-glutamate. Its pathway is amino-acid biosynthesis; L-histidine biosynthesis; L-histidine from 5-phospho-alpha-D-ribose 1-diphosphate: step 7/9. The protein is Histidinol-phosphate aminotransferase of Macrococcus caseolyticus (strain JCSC5402) (Macrococcoides caseolyticum).